The primary structure comprises 425 residues: Probable mitochondrial import inner membrane translocase subunit tin-44 (425 aa).

A coiled-coil region spans residues 38–149 (FLNNLIDNVR…EHVEKVAEKV (112 aa)).

The protein belongs to the Tim44 family. Probable component of the PAM complex at least composed of a mitochondrial HSP70 protein, GrpE, tin-44, tim-16 and tim-14/dnj-21. The complex interacts with the tim-23 component of the TIM23 complex.

Its subcellular location is the mitochondrion inner membrane. Essential component of the PAM complex, a complex required for the translocation of transit peptide-containing proteins from the inner membrane into the mitochondrial matrix in an ATP-dependent manner. Recruits mitochondrial HSP70 to drive protein translocation into the matrix using ATP as an energy source. The sequence is that of Probable mitochondrial import inner membrane translocase subunit tin-44 from Caenorhabditis elegans.